Reading from the N-terminus, the 275-residue chain is Phosphonoacetaldehyde hydrolase (275 aa).

Catalysis depends on D15, which acts as the Nucleophile. Residues D15 and A17 each coordinate Mg(2+). The active-site Schiff-base intermediate with substrate is the K56. D189 lines the Mg(2+) pocket.

This sequence belongs to the HAD-like hydrolase superfamily. PhnX family. In terms of assembly, homodimer. Requires Mg(2+) as cofactor.

It catalyses the reaction phosphonoacetaldehyde + H2O = acetaldehyde + phosphate + H(+). In terms of biological role, involved in phosphonate degradation. This chain is Phosphonoacetaldehyde hydrolase, found in Pseudomonas putida (Arthrobacter siderocapsulatus).